A 460-amino-acid chain; its full sequence is MFFDTIAAISTPLGTGGVSVIRVSGNNSITEINKIFKGKNLIKAKTHTITHGFILNKDQTILDEVLISVFKTPNSFTGENVVEINAHGGILITQMVLERILSLDIRLAFPGEFSQRAYLNGKMDLIQAESIMDLIHATNENAIKIANSGLQKYTSQLVTSLRDQILNLIAQIEVNIDYPEYDDIPQITQQKIALEVQSLIKQLENILSHSHKNRYLKEGIKTLIIGRPNVGKSSLLNAFLNENKAIVSDISGTTRDFVEAYFNCRGFTLHLIDTAGIRKTDDPIEKIGILRTEKMLLQAELILLVLDQSNYLQEEDIQLLQLTQNYPRIIIGNKVDLKSDKLISSLCDYSSQLTPQEIISVSSLDKTGFFELQQTILKKFQLNDIKPKDFNYFSNARHINQIQIALRSFQDLQQALLQSMPIDIYSIDLTKAYQALGQIIGENQENSLIKELFSKFCLGK.

Residues Arg22, Glu83, and Lys122 each contribute to the (6S)-5-formyl-5,6,7,8-tetrahydrofolate site. A TrmE-type G domain is found at 219–381 (GIKTLIIGRP…LQQTILKKFQ (163 aa)). Asn229 lines the K(+) pocket. Residues 229 to 234 (NVGKSS), 248 to 254 (SDISGTT), and 273 to 276 (DTAG) each bind GTP. A Mg(2+)-binding site is contributed by Ser233. The K(+) site is built by Ser248, Ile250, and Thr253. Residue Thr254 participates in Mg(2+) binding. Lys460 contributes to the (6S)-5-formyl-5,6,7,8-tetrahydrofolate binding site.

This sequence belongs to the TRAFAC class TrmE-Era-EngA-EngB-Septin-like GTPase superfamily. TrmE GTPase family. In terms of assembly, homodimer. Heterotetramer of two MnmE and two MnmG subunits. The cofactor is K(+).

Its subcellular location is the cytoplasm. In terms of biological role, exhibits a very high intrinsic GTPase hydrolysis rate. Involved in the addition of a carboxymethylaminomethyl (cmnm) group at the wobble position (U34) of certain tRNAs, forming tRNA-cmnm(5)s(2)U34. The sequence is that of tRNA modification GTPase MnmE from Aster yellows witches'-broom phytoplasma (strain AYWB).